Consider the following 121-residue polypeptide: Small ribosomal subunit protein uS13 (121 aa).

The disordered stretch occupies residues 94–121 (GLPLRGQRTRTNARTRKGPRRAAQSLKK).

Belongs to the universal ribosomal protein uS13 family. In terms of assembly, part of the 30S ribosomal subunit. Forms a loose heterodimer with protein S19. Forms two bridges to the 50S subunit in the 70S ribosome.

Located at the top of the head of the 30S subunit, it contacts several helices of the 16S rRNA. In the 70S ribosome it contacts the 23S rRNA (bridge B1a) and protein L5 of the 50S subunit (bridge B1b), connecting the 2 subunits; these bridges are implicated in subunit movement. Contacts the tRNAs in the A and P-sites. The polypeptide is Small ribosomal subunit protein uS13 (Paraburkholderia phymatum (strain DSM 17167 / CIP 108236 / LMG 21445 / STM815) (Burkholderia phymatum)).